The primary structure comprises 83 residues: Alpha-elapitoxin-Ppr1 (83 aa).

The first 21 residues, 1 to 21, serve as a signal peptide directing secretion; that stretch reads MKTLLLTLVVVTIVCLDLGYT. Intrachain disulfides connect Cys24–Cys45, Cys38–Cys62, Cys64–Cys75, and Cys76–Cys81.

It belongs to the three-finger toxin family. Short-chain subfamily. Type I alpha-neurotoxin sub-subfamily. As to expression, expressed by the venom gland.

The protein resides in the secreted. Bird-specific neurotoxin (tested on chicken) that acts as a pseudo-irreversible antagonist at the nicotinic acetylcholine receptor (nAChR) of the skeletal neuromuscular junction. Has no significant effect on the electrically-induced twitches of the rat isolated phrenic nerve-diaphragm preparation. This Pseudechis porphyriacus (Red-bellied black snake) protein is Alpha-elapitoxin-Ppr1.